A 370-amino-acid chain; its full sequence is Protein DUF642 L-GALACTONO-1,4-LACTONE-RESPONSIVE GENE 1 (370 aa).

The signal sequence occupies residues 1 to 22; the sequence is MMYQEAALLLALLFISSNVVLS. N-linked (GlcNAc...) asparagine glycosylation occurs at Asn-124.

Expressed at low levels in roots, seedlings and leaves.

It is found in the secreted. Its subcellular location is the cell wall. This is Protein DUF642 L-GALACTONO-1,4-LACTONE-RESPONSIVE GENE 1 from Arabidopsis thaliana (Mouse-ear cress).